Here is a 162-residue protein sequence, read N- to C-terminus: Inorganic pyrophosphatase (162 aa).

A Mg(2+)-binding site is contributed by Glu-8. 3 residues coordinate substrate: Lys-16, Arg-30, and Tyr-42. Positions 52, 57, 84, and 89 each coordinate Mg(2+). The active-site Proton acceptor is the Asp-89. Residue Tyr-126 participates in substrate binding.

This sequence belongs to the PPase family. Homohexamer. Requires Mg(2+) as cofactor.

Its subcellular location is the cytoplasm. The catalysed reaction is diphosphate + H2O = 2 phosphate + H(+). Catalyzes the hydrolysis of inorganic pyrophosphate (PPi) forming two phosphate ions. The chain is Inorganic pyrophosphatase from Mycobacterium leprae (strain TN).